The primary structure comprises 138 residues: MTLNLRVMAPNRIVWNSEVEEIVLSTNSGQIGVLPNHAPLLTALDIGIIKIRLNGEWSTMALMGGFAMIDNNGMTILVNEAEKATEINPQEARENYKMAQKDLAKAEGGKQKIEANLAFKRAKARLEAIDVISFPVSN.

Belongs to the ATPase epsilon chain family. In terms of assembly, F-type ATPases have 2 components, CF(1) - the catalytic core - and CF(0) - the membrane proton channel. CF(1) has five subunits: alpha(3), beta(3), gamma(1), delta(1), epsilon(1). CF(0) has three main subunits: a, b and c.

It localises to the plastid. The protein resides in the chloroplast thylakoid membrane. Produces ATP from ADP in the presence of a proton gradient across the membrane. This is ATP synthase epsilon chain, chloroplastic from Anthoceros angustus (Hornwort).